Here is a 559-residue protein sequence, read N- to C-terminus: Phosphoinositide 3-phosphatase (559 aa).

The Myotubularin phosphatase domain occupies 120–541; it reads SWKSFLLENE…SSLRWWSASF (422 aa). Catalysis depends on cysteine 342, which acts as the Phosphocysteine intermediate.

The protein belongs to the protein-tyrosine phosphatase family. Non-receptor class myotubularin subfamily.

It localises to the cytoplasm. The catalysed reaction is a 1,2-diacyl-sn-glycero-3-phospho-(1D-myo-inositol-3-phosphate) + H2O = a 1,2-diacyl-sn-glycero-3-phospho-(1D-myo-inositol) + phosphate. Its function is as follows. Lipid phosphatase which dephosphorylates phosphatidylinositol 3-monophosphate (PI3P). Involved in the control of PI3P-dependent signaling and in the maintenance of endosomal system integrity. The chain is Phosphoinositide 3-phosphatase from Schizosaccharomyces pombe (strain 972 / ATCC 24843) (Fission yeast).